We begin with the raw amino-acid sequence, 512 residues long: Zinc metalloprotease mde10 (512 aa).

The signal sequence occupies residues 1-15 (MRLVLLFSCVLAVSS). The N-linked (GlcNAc...) asparagine glycan is linked to Asn-35. The region spanning 65–306 (QTLWIGVVAD…KYVSLSCLSK (242 aa)) is the Peptidase M12B domain. Residue His-229 coordinates Zn(2+). Residue Glu-230 is part of the active site. The Zn(2+) site is built by His-233 and His-239. Cystine bridges form between Cys-246/Cys-254 and Cys-374/Cys-394. In terms of domain architecture, Disintegrin spans 315–402 (LGTCGNGIVE…KCPVDENWDD (88 aa)). Asn-432 carries an N-linked (GlcNAc...) asparagine glycan.

Requires Zn(2+) as cofactor. Post-translationally, glycosylated.

It localises to the endoplasmic reticulum. The protein resides in the spore wall. Functionally, has a role in the development of the spore envelope. The sequence is that of Zinc metalloprotease mde10 (mde10) from Schizosaccharomyces pombe (strain 972 / ATCC 24843) (Fission yeast).